The chain runs to 306 residues: MLNYVIKRLLGLIPTLFIVSVLVFLFVHMLPGDPARLIAGPEADAQVIELVRQQLGLDQPLYHQFWHYISNAVQGDLGLSMVSRRPVADEIASRFMPTLWLTITSMVWAVIFGMAAGIIAAVWRNRWPDRLSMTIAVSGISFPAFALGMLLIQVFSVELGWLPTVGADSWQHYILPSLTLGAAVAAVMARFTRASFVDVLSEDYMRTARAKGVSETWVVLKHGLRNAMIPVVTMMGLQFGFLLGGSIVVEKVFNWPGLGRLLVDSVEMRDYPVIQAEILLFSLEFILINLVVDVLYAAINPAIRYK.

The Cytoplasmic segment spans residues 1 to 8 (MLNYVIKR). The chain crosses the membrane as a helical span at residues 9-29 (LLGLIPTLFIVSVLVFLFVHM). Topologically, residues 30-102 (LPGDPARLIA…SRFMPTLWLT (73 aa)) are periplasmic. Residues 95–292 (FMPTLWLTIT…LEFILINLVV (198 aa)) enclose the ABC transmembrane type-1 domain. The chain crosses the membrane as a helical span at residues 103–123 (ITSMVWAVIFGMAAGIIAAVW). Over 124–134 (RNRWPDRLSMT) the chain is Cytoplasmic. A helical transmembrane segment spans residues 135–155 (IAVSGISFPAFALGMLLIQVF). Topologically, residues 156 to 168 (SVELGWLPTVGAD) are periplasmic. The helical transmembrane segment at 169–189 (SWQHYILPSLTLGAAVAAVMA) threads the bilayer. Topologically, residues 190 to 228 (RFTRASFVDVLSEDYMRTARAKGVSETWVVLKHGLRNAM) are cytoplasmic. The helical transmembrane segment at 229–249 (IPVVTMMGLQFGFLLGGSIVV) threads the bilayer. Residues 250-277 (EKVFNWPGLGRLLVDSVEMRDYPVIQAE) are Periplasmic-facing. A helical membrane pass occupies residues 278–298 (ILLFSLEFILINLVVDVLYAA). Topologically, residues 299-306 (INPAIRYK) are cytoplasmic.

The protein belongs to the binding-protein-dependent transport system permease family. As to quaternary structure, the complex is composed of two ATP-binding proteins (GsiA), two transmembrane proteins (GsiC and GsiD) and a solute-binding protein (GsiB).

It localises to the cell inner membrane. Part of the ABC transporter complex GsiABCD involved in glutathione import. Probably responsible for the translocation of the substrate across the membrane. The polypeptide is Glutathione transport system permease protein GsiC (Escherichia coli O6:H1 (strain CFT073 / ATCC 700928 / UPEC)).